A 298-amino-acid polypeptide reads, in one-letter code: Mimecan (298 aa).

The signal sequence occupies residues 1–20 (MKTLQSTLLLLLFVPLIKPA). Asparagine 88 carries an N-linked (GlcNAc...) (keratan sulfate) asparagine glycan. LRR repeat units follow at residues 112–131 (DAVPPLPKESAYLYARFNKI), 132–155 (KKLTAKDFADIPNLRRLDFTGNLI), 156–179 (EDIEDGTFSKLSLLEELSLAENQL), 180–199 (LKLPVLPPKLTLFNAKYNKI), 200–225 (KSRGIKANAFKKLNNLTFLYLDHNAL), 226–246 (ESVPLNLPESLRVIHLQFNNI), and 247–277 (ASITDDTFCKANDTSYIRDRIEEIRLEGNPI). Asparagine 214 is a glycosylation site (N-linked (GlcNAc...) (keratan sulfate) asparagine). A disulfide bridge links cysteine 255 with cysteine 288. The N-linked (GlcNAc...) (keratan sulfate) asparagine glycan is linked to asparagine 258.

The protein belongs to the small leucine-rich proteoglycan (SLRP) family. SLRP class III subfamily. In terms of processing, contains keratan sulfate.

The protein resides in the secreted. It is found in the extracellular space. The protein localises to the extracellular matrix. In terms of biological role, induces bone formation in conjunction with TGF-beta-1 or TGF-beta-2. The chain is Mimecan (OGN) from Pongo abelii (Sumatran orangutan).